The following is a 538-amino-acid chain: UNC93-like protein (538 aa).

N-linked (GlcNAc...) asparagine glycosylation occurs at Asn-45. 5 consecutive transmembrane segments (helical) span residues 46 to 66, 80 to 100, 105 to 125, 128 to 148, and 170 to 190; these read ISII…TANL, SLSA…TLII, VKWT…FQLF, FYTL…MWAS, and AIIV…ELWG. Asn-210 carries an N-linked (GlcNAc...) asparagine glycan. The next 7 membrane-spanning stretches (helical) occupy residues 244–264, 305–325, 338–358, 366–386, 394–414, 435–455, and 457–477; these read IFEI…IIAF, LLIP…ADFT, IGFV…LFGS, TPII…ELFW, IIFY…QTQI, LWES…CTQM, and LYIL…VEIL.

This sequence belongs to the unc-93 family.

It is found in the membrane. The polypeptide is UNC93-like protein (Drosophila melanogaster (Fruit fly)).